The following is a 138-amino-acid chain: Large ribosomal subunit protein uL16 (138 aa).

Belongs to the universal ribosomal protein uL16 family. As to quaternary structure, part of the 50S ribosomal subunit.

In terms of biological role, binds 23S rRNA and is also seen to make contacts with the A and possibly P site tRNAs. The protein is Large ribosomal subunit protein uL16 of Anaeromyxobacter dehalogenans (strain 2CP-C).